We begin with the raw amino-acid sequence, 193 residues long: Zinc finger protein 740 (193 aa).

A disordered region spans residues 33 to 75; it reads SKQAENGERAGSPDVLRCSSQGHRKDSDKSRSRKDDDSLSEAS. Lysine 34 is covalently cross-linked (Glycyl lysine isopeptide (Lys-Gly) (interchain with G-Cter in SUMO2)). Residue serine 44 is modified to Phosphoserine. Positions 55 to 69 are enriched in basic and acidic residues; the sequence is HRKDSDKSRSRKDDD. C2H2-type zinc fingers lie at residues 101-123 and 129-151; these read FVCE…ILIH and FECD…KRVH. A C2H2-type 3; atypical zinc finger spans residues 157–179; sequence YQCERCHQCFSRTDRLLRHKRMC.

This sequence belongs to the krueppel C2H2-type zinc-finger protein family.

It is found in the nucleus. In terms of biological role, may be involved in transcriptional regulation. In Homo sapiens (Human), this protein is Zinc finger protein 740 (ZNF740).